The chain runs to 293 residues: Proline iminopeptidase (293 aa).

The 250-residue stretch at 28-277 (PLVLLHGGPG…NCSHMSFVQK (250 aa)) folds into the AB hydrolase-1 domain. S105 (nucleophile) is an active-site residue. Residue D244 is part of the active site. The active-site Proton donor is the H271.

The protein belongs to the peptidase S33 family.

The protein resides in the cell envelope. It catalyses the reaction Release of N-terminal proline from a peptide.. Releases the N-terminal proline from various substrates. In Lactobacillus acidophilus (strain ATCC 700396 / NCK56 / N2 / NCFM), this protein is Proline iminopeptidase.